Here is a 1763-residue protein sequence, read N- to C-terminus: Non-reducing polyketide synthase PKS19 (1763 aa).

The N-terminal acylcarrier protein transacylase domain (SAT) stretch occupies residues 20-261 (GDQRNLFRKL…PMKKVQGMWH (242 aa)). The 433-residue stretch at 390 to 822 (SSKIAVVGMA…GGNTSIIIEE (433 aa)) folds into the Ketosynthase family 3 (KS3) domain. Active-site for beta-ketoacyl synthase activity residues include Cys-561, His-696, and His-740. Residues 922 to 1227 (FAFTGQGTFY…QRDTDNWLTL (306 aa)) form a malonyl-CoA:ACP transacylase (MAT) domain region. Residues 1307 to 1439 (HRLISEQYTD…VFYEDPSSWL (133 aa)) are N-terminal hotdog fold. The PKS/mFAS DH domain maps to 1307-1609 (HRLISEQYTD…FLQWPRVMLN (303 aa)). The tract at residues 1334-1588 (GVVDGHAMNG…FVGDVYVLQG (255 aa)) is product template (PT) domain. His-1339 functions as the Proton acceptor; for dehydratase activity in the catalytic mechanism. The tract at residues 1461–1609 (VTGKASKLTT…FLQWPRVMLN (149 aa)) is C-terminal hotdog fold. Asp-1522 functions as the Proton donor; for dehydratase activity in the catalytic mechanism. Residues 1619-1690 (AKPAAKVPGK…MEELPSPPAG (72 aa)) form a disordered region. Positions 1635-1647 (PHFKPHHVSRHKP) are enriched in basic residues. The region spanning 1689-1763 (AGMNDDMEKA…TIQDLKALLR (75 aa)) is the Carrier domain. Residue Ser-1726 is modified to O-(pantetheine 4'-phosphoryl)serine.

Functionally, non-reducing polyketide synthase that mediates the biosynthesis of alternariol (AOH), a micotoxin that seems not to be involved in virulence and oxidative stress tolerance. PKS19 alone is sufficient for AOH synthesis which is initiated by priming with acetyl-CoA, followed by sequential condensations of 6 malonyl-CoA units. The protein is Non-reducing polyketide synthase PKS19 of Phaeosphaeria nodorum (strain SN15 / ATCC MYA-4574 / FGSC 10173) (Glume blotch fungus).